The following is a 193-amino-acid chain: UMP-CMP kinase (193 aa).

Residue Gly13–Thr18 coordinates ATP. The interval Ser33–Val63 is NMP. Residues Arg39, Lys61–Val63, and Gly93–Arg96 each bind a ribonucleoside 5'-phosphate. Residue Asn100 participates in CMP binding. The interval Glu133 to Asp143 is LID. Arg134 serves as a coordination point for ATP. A ribonucleoside 5'-phosphate is bound by residues Arg140 and Arg151. Position 179 (Lys179) interacts with ATP.

It belongs to the adenylate kinase family. UMP-CMP kinase subfamily. Monomer. Mg(2+) serves as cofactor.

The protein resides in the nucleus. It is found in the cytoplasm. The enzyme catalyses CMP + ATP = CDP + ADP. It carries out the reaction dCMP + ATP = dCDP + ADP. It catalyses the reaction UMP + ATP = UDP + ADP. The catalysed reaction is a 2'-deoxyribonucleoside 5'-diphosphate + ATP = a 2'-deoxyribonucleoside 5'-triphosphate + ADP. The enzyme catalyses a ribonucleoside 5'-diphosphate + ATP = a ribonucleoside 5'-triphosphate + ADP. Functionally, catalyzes the phosphorylation of pyrimidine nucleoside monophosphates at the expense of ATP. Plays an important role in de novo pyrimidine nucleotide biosynthesis. Has preference for UMP and CMP as phosphate acceptors. Also displays broad nucleoside diphosphate kinase activity. In Xenopus laevis (African clawed frog), this protein is UMP-CMP kinase (cmpk1).